The chain runs to 164 residues: Cyclic pyranopterin monophosphate synthase (164 aa).

Substrate is bound by residues 75–77 (MAH) and 112–113 (ME). Residue D127 is part of the active site.

The protein belongs to the MoaC family. In terms of assembly, homohexamer; trimer of dimers.

The catalysed reaction is (8S)-3',8-cyclo-7,8-dihydroguanosine 5'-triphosphate = cyclic pyranopterin phosphate + diphosphate. It functions in the pathway cofactor biosynthesis; molybdopterin biosynthesis. In terms of biological role, catalyzes the conversion of (8S)-3',8-cyclo-7,8-dihydroguanosine 5'-triphosphate to cyclic pyranopterin monophosphate (cPMP). The polypeptide is Cyclic pyranopterin monophosphate synthase (Desulforamulus reducens (strain ATCC BAA-1160 / DSM 100696 / MI-1) (Desulfotomaculum reducens)).